A 320-amino-acid chain; its full sequence is Probable protein adenylyltransferase aq_aa38 (320 aa).

In terms of domain architecture, Fido spans 76-206; sequence VSEALILWIY…AIVVVEKLSR (131 aa). ATP contacts are provided by residues 100-101, 157-159, and Arg-163; these read KS and GNG.

This sequence belongs to the fic family.

The catalysed reaction is L-tyrosyl-[protein] + ATP = O-(5'-adenylyl)-L-tyrosyl-[protein] + diphosphate. It carries out the reaction L-threonyl-[protein] + ATP = 3-O-(5'-adenylyl)-L-threonyl-[protein] + diphosphate. Its function is as follows. Probable adenylyltransferase that mediates the addition of adenosine 5'-monophosphate (AMP) to specific residues of target proteins. The protein is Probable protein adenylyltransferase aq_aa38 of Aquifex aeolicus (strain VF5).